The primary structure comprises 20 residues: Punein (20 aa).

Residues 1-20 enclose the Barwin domain; sequence YHYYNPEENHFCATWDASKP.

Post-translationally, the N-terminus is blocked.

In Punica granatum (Pomegranate), this protein is Punein.